A 185-amino-acid polypeptide reads, in one-letter code: Ribosome-recycling factor (185 aa).

The protein belongs to the RRF family.

It localises to the cytoplasm. In terms of biological role, responsible for the release of ribosomes from messenger RNA at the termination of protein biosynthesis. May increase the efficiency of translation by recycling ribosomes from one round of translation to another. This chain is Ribosome-recycling factor, found in Corynebacterium glutamicum (strain ATCC 13032 / DSM 20300 / JCM 1318 / BCRC 11384 / CCUG 27702 / LMG 3730 / NBRC 12168 / NCIMB 10025 / NRRL B-2784 / 534).